A 141-amino-acid chain; its full sequence is Hemoglobin subunit alpha (141 aa).

Residues 1–22 (VLSEDDKNRVRTSVGKNPELPG) form a disordered region. Positions 1-141 (VLSEDDKNRV…VSEVLESKYR (141 aa)) constitute a Globin domain. H58 is an O2 binding site. Residue H87 coordinates heme b.

It belongs to the globin family. In terms of assembly, heterotetramer of two alpha chains and two beta chains. As to expression, red blood cells.

Its function is as follows. Involved in oxygen transport from the lung to the various peripheral tissues. The protein is Hemoglobin subunit alpha (HBA) of Vipera aspis (Aspic viper).